Here is a 287-residue protein sequence, read N- to C-terminus: Ret finger protein-like 4A (287 aa).

Residues 11-53 form an RING-type; degenerate zinc finger; it reads CYFCFRCLESPVYLNCGYICCLKCLDSLEKSPEGDGVLCPTCS. A B30.2/SPRY domain is found at 78 to 278; that stretch reads EPQLNFILTM…LSICPVTNPG (201 aa).

Interacts with PSMB1, UBE2A and CCNB1. In terms of tissue distribution, expressed in the ovaries and oocytes (at protein level). Expression restricted to gonads. In testis, present at later stages of spermatogeneis and abundant in elongating spermatids.

The protein resides in the cytoplasm. Its subcellular location is the nucleus. The polypeptide is Ret finger protein-like 4A (Rfpl4a) (Mus musculus (Mouse)).